Consider the following 858-residue polypeptide: Receptor-like protein kinase ANXUR2 (858 aa).

A signal peptide spans 1 to 27 (MNEKLRILFSFLCFFYVLLVSPSQSNG). Over 28–431 (QDISLSCGAS…VKKDFQGDKR (404 aa)) the chain is Extracellular. N-linked (GlcNAc...) asparagine glycans are attached at residues Asn133, Asn293, Asn303, and Asn331. Residues 432-452 (ITAFVIGSAGGVAAVLFCALC) traverse the membrane as a helical segment. The Cytoplasmic segment spans residues 453 to 858 (FTMYQRKRKF…FSQIVNPKGR (406 aa)). The region spanning 521-794 (FDESNVIGVG…GDVLWNLEFA (274 aa)) is the Protein kinase domain. ATP is bound by residues 527–535 (IGVGGFGKV) and Lys549. The Proton acceptor role is filled by Asp645. Residues 800–858 (TADGSRHRTPSNGGGSVDLGGGGGGVTVNISAGESDLGDDLSSEENSGIFSQIVNPKGR) are disordered. Gly residues predominate over residues 811 to 825 (NGGGSVDLGGGGGGV). Polar residues predominate over residues 843–858 (EENSGIFSQIVNPKGR).

The protein belongs to the protein kinase superfamily. Ser/Thr protein kinase family. In terms of tissue distribution, expressed in pollen, but not in pistils or seedlings.

It is found in the cell membrane. It catalyses the reaction L-seryl-[protein] + ATP = O-phospho-L-seryl-[protein] + ADP + H(+). It carries out the reaction L-threonyl-[protein] + ATP = O-phospho-L-threonyl-[protein] + ADP + H(+). In terms of biological role, receptor-like protein kinase that controls pollen tube behavior by directing rupture at proper timing to release the sperm cell. The chain is Receptor-like protein kinase ANXUR2 (ANX2) from Arabidopsis thaliana (Mouse-ear cress).